The chain runs to 151 residues: Probable ubiquitin-conjugating enzyme E2 W-B (151 aa).

One can recognise a UBC core domain in the interval 3–151 (SMQKRLQKEL…TKWWYHDDTC (149 aa)). Catalysis depends on cysteine 91, which acts as the Glycyl thioester intermediate.

It belongs to the ubiquitin-conjugating enzyme family.

Its subcellular location is the nucleus. The catalysed reaction is S-ubiquitinyl-[E1 ubiquitin-activating enzyme]-L-cysteine + [E2 ubiquitin-conjugating enzyme]-L-cysteine = [E1 ubiquitin-activating enzyme]-L-cysteine + S-ubiquitinyl-[E2 ubiquitin-conjugating enzyme]-L-cysteine.. The enzyme catalyses S-ubiquitinyl-[E1 ubiquitin-activating enzyme]-L-cysteine + [acceptor protein]-N-terminal-amino acid = [E1 ubiquitin-activating enzyme]-L-cysteine + N-terminal-ubiquitinyl-[acceptor protein].. The protein operates within protein modification; protein ubiquitination. Accepts ubiquitin from the E1 complex and catalyzes its covalent attachment to other proteins. Catalyzes monoubiquitination. Involved in degradation of misfolded chaperone substrate and DNA repair. This chain is Probable ubiquitin-conjugating enzyme E2 W-B (ube2wb), found in Danio rerio (Zebrafish).